Here is a 470-residue protein sequence, read N- to C-terminus: Putative F-box/LRR-repeat protein At3g58920 (470 aa).

Residues 1–53 (MDRISNLPNEIICHIVSFLSAKEAAFASVLSKRWQNLFTIVQKLEFDDSVKNQ) enclose the F-box domain. LRR repeat units lie at residues 114-142 (KLEIYGEDGYLLPSEVFTCKTIVDLKLTS), 143-170 (CIFAESYVIDVIPENAFLPGLESLFLKS), 173-198 (FSDLRGCAFQTLLSACPVLKTLTIYD), 225-250 (FTYFNGSDFKSITFDTPSLTYLKYID), 287-312 (EDDPITSNPTNLIKGLRNVEILHLST), and 342-367 (YECFNWRLLPILLKKTPNLKTLMIKG).

This is Putative F-box/LRR-repeat protein At3g58920 from Arabidopsis thaliana (Mouse-ear cress).